Consider the following 377-residue polypeptide: 4-hydroxy-3-methylbut-2-en-1-yl diphosphate synthase (flavodoxin) (377 aa).

Cys-275, Cys-278, Cys-310, and Glu-317 together coordinate [4Fe-4S] cluster.

This sequence belongs to the IspG family. [4Fe-4S] cluster is required as a cofactor.

It carries out the reaction (2E)-4-hydroxy-3-methylbut-2-enyl diphosphate + oxidized [flavodoxin] + H2O + 2 H(+) = 2-C-methyl-D-erythritol 2,4-cyclic diphosphate + reduced [flavodoxin]. Its pathway is isoprenoid biosynthesis; isopentenyl diphosphate biosynthesis via DXP pathway; isopentenyl diphosphate from 1-deoxy-D-xylulose 5-phosphate: step 5/6. In terms of biological role, converts 2C-methyl-D-erythritol 2,4-cyclodiphosphate (ME-2,4cPP) into 1-hydroxy-2-methyl-2-(E)-butenyl 4-diphosphate. This is 4-hydroxy-3-methylbut-2-en-1-yl diphosphate synthase (flavodoxin) from Jannaschia sp. (strain CCS1).